Consider the following 111-residue polypeptide: Cell division protein FtsB (111 aa).

Residues 1–3 (MRL) lie on the Cytoplasmic side of the membrane. Residues 4-21 (ITLFLLLLLLAIQYPLWL) form a helical membrane-spanning segment. The Periplasmic portion of the chain corresponds to 22–111 (GKGGWLRVWD…PPPAGQQAHH (90 aa)). Residues 31-64 (DMQKQVTAQNQRNAELKQRNTKLEGEVKDLKEGT) are a coiled coil. The tract at residues 89 to 111 (APAPKTSETPLPPPPPAGQQAHH) is disordered.

This sequence belongs to the FtsB family. As to quaternary structure, part of a complex composed of FtsB, FtsL and FtsQ.

It localises to the cell inner membrane. Its function is as follows. Essential cell division protein. May link together the upstream cell division proteins, which are predominantly cytoplasmic, with the downstream cell division proteins, which are predominantly periplasmic. The protein is Cell division protein FtsB of Ralstonia pickettii (strain 12J).